The sequence spans 354 residues: Probable calcium-binding protein CML50 (354 aa).

Low complexity-rich tracts occupy residues 1–10 (MSGYPPTSQG) and 28–71 (YSSG…SSYG). The segment at 1–159 (MSGYPPTSQG…PASSGHGGGY (159 aa)) is disordered. Residues 72 to 81 (APPPSAPYAP) show a composition bias toward pro residues. The span at 106 to 117 (GSSDYGSYGAGP) shows a compositional bias: low complexity. 2 consecutive EF-hand domains span residues 183–218 (GTDP…YQQR) and 249–284 (YSLQ…LGFS). D196, D198, S200, E207, D262, D264, S266, R268, and E273 together coordinate Ca(2+).

In terms of biological role, potential calcium sensor. This Arabidopsis thaliana (Mouse-ear cress) protein is Probable calcium-binding protein CML50 (CML50).